The chain runs to 358 residues: Molybdenum import ATP-binding protein ModC (358 aa).

The 233-residue stretch at 2-234 (NDDISASFFS…PDLPLAHLEE (233 aa)) folds into the ABC transporter domain. Residue 34 to 41 (GRSGSGKT) participates in ATP binding. The 66-residue stretch at 293–358 (LSSISNCIPV…AQVKSVALID (66 aa)) folds into the Mop domain.

The protein belongs to the ABC transporter superfamily. Molybdate importer (TC 3.A.1.8) family. In terms of assembly, the complex is composed of two ATP-binding proteins (ModC), two transmembrane proteins (ModB) and a solute-binding protein (ModA).

Its subcellular location is the cell inner membrane. The enzyme catalyses molybdate(out) + ATP + H2O = molybdate(in) + ADP + phosphate + H(+). In terms of biological role, part of the ABC transporter complex ModABC involved in molybdenum import. Responsible for energy coupling to the transport system. The polypeptide is Molybdenum import ATP-binding protein ModC (Hahella chejuensis (strain KCTC 2396)).